A 365-amino-acid polypeptide reads, in one-letter code: Caffeic acid 3-O-methyltransferase (365 aa).

130–136 (MNQDKVL) is a binding site for substrate. Residues 162–180 (AFEYHGTDPRFNKVFNRGM) are substrate binding. 5 residues coordinate S-adenosyl-L-methionine: G208, D231, D251, M252, and K265. H269 functions as the Proton acceptor in the catalytic mechanism.

The protein belongs to the class I-like SAM-binding methyltransferase superfamily. Cation-independent O-methyltransferase family. COMT subfamily. As to quaternary structure, homodimer.

The enzyme catalyses (E)-caffeate + S-adenosyl-L-methionine = (E)-ferulate + S-adenosyl-L-homocysteine + H(+). Its pathway is aromatic compound metabolism; phenylpropanoid biosynthesis. Functionally, catalyzes the conversion of caffeic acid to ferulic acid and of 5-hydroxyferulic acid to sinapic acid. The resulting products may subsequently be converted to the corresponding alcohols that are incorporated into lignins. The chain is Caffeic acid 3-O-methyltransferase (COMT1) from Prunus dulcis (Almond).